Consider the following 380-residue polypeptide: 1-deoxy-D-xylulose 5-phosphate reductoisomerase (380 aa).

NADPH contacts are provided by Ser-10, Gly-11, Ser-12, Ile-13, Gly-36, Lys-37, Asn-38, and Asn-120. Lys-121 contacts 1-deoxy-D-xylulose 5-phosphate. Glu-122 is an NADPH binding site. Residue Asp-146 coordinates Mn(2+). The 1-deoxy-D-xylulose 5-phosphate site is built by Ser-147, Glu-148, Ser-172, and His-195. Mn(2+) is bound at residue Glu-148. Gly-201 lines the NADPH pocket. Ser-208, Asn-213, Lys-214, and Glu-217 together coordinate 1-deoxy-D-xylulose 5-phosphate. Glu-217 contacts Mn(2+).

The protein belongs to the DXR family. The cofactor is Mg(2+). It depends on Mn(2+) as a cofactor.

It catalyses the reaction 2-C-methyl-D-erythritol 4-phosphate + NADP(+) = 1-deoxy-D-xylulose 5-phosphate + NADPH + H(+). Its pathway is isoprenoid biosynthesis; isopentenyl diphosphate biosynthesis via DXP pathway; isopentenyl diphosphate from 1-deoxy-D-xylulose 5-phosphate: step 1/6. Catalyzes the NADPH-dependent rearrangement and reduction of 1-deoxy-D-xylulose-5-phosphate (DXP) to 2-C-methyl-D-erythritol 4-phosphate (MEP). This is 1-deoxy-D-xylulose 5-phosphate reductoisomerase from Bacillus cereus (strain AH187).